The primary structure comprises 88 residues: Phosphoribosyl-ATP pyrophosphatase (88 aa).

It belongs to the PRA-PH family.

Its subcellular location is the cytoplasm. It carries out the reaction 1-(5-phospho-beta-D-ribosyl)-ATP + H2O = 1-(5-phospho-beta-D-ribosyl)-5'-AMP + diphosphate + H(+). It participates in amino-acid biosynthesis; L-histidine biosynthesis; L-histidine from 5-phospho-alpha-D-ribose 1-diphosphate: step 2/9. This chain is Phosphoribosyl-ATP pyrophosphatase, found in Cutibacterium acnes (strain DSM 16379 / KPA171202) (Propionibacterium acnes).